The primary structure comprises 547 residues: RNA N(6)-adenosine-methyltransferase mettl16 (547 aa).

The segment at 17–20 (PPDF) is RNA-binding. Residues R82, G110, S114, E133, T164, and N184 each contribute to the S-adenosyl-L-methionine site. The K-loop stretch occupies residues 163–167 (KTLLM). RNA-binding stretches follow at residues 199-211 (SRNPHRSPPSSVN), 250-254 (GKKCS), and 277-283 (QGRTMRW). Residues 289–398 (FYEEVIIPNP…QLRELPRAPN (110 aa)) are VCR 1. The tract at residues 383-473 (KRDRTRQLRE…SKPDEVCNND (91 aa)) is disordered. The segment covering 431 to 447 (SVTQSETCVPHTSSTPE) has biased composition (polar residues). The VCR 2 stretch occupies residues 500–547 (FLFKCVLNVKKENSDVLVEMHCVEGQNRDLMNQLCTYIRNQIYRLATS).

It belongs to the methyltransferase superfamily. METTL16/RlmF family.

It localises to the nucleus. The protein resides in the cytoplasm. The enzyme catalyses adenosine in U6 snRNA + S-adenosyl-L-methionine = N(6)-methyladenosine in U6 snRNA + S-adenosyl-L-homocysteine + H(+). It catalyses the reaction an adenosine in mRNA + S-adenosyl-L-methionine = an N(6)-methyladenosine in mRNA + S-adenosyl-L-homocysteine + H(+). Its activity is regulated as follows. Methyltransferase activity is autoinhibited by the K-loop region that blocks S-adenosyl-L-methionine-binding. Upon activation, K-loop changes conformation, allowing S-adenosyl-L-methionine-binding and subsequent methyltransferase activity. mRNA N6-adenosine-methyltransferase activity is inhibited by zinc. Its function is as follows. RNA N6-methyltransferase that methylates adenosine residues at the N(6) position of a subset of RNAs and is involved in S-adenosyl-L-methionine homeostasis by regulating expression of MAT2A transcripts. Able to N6-methylate a subset of mRNAs and U6 small nuclear RNAs (U6 snRNAs). In contrast to the METTL3-METTL14 heterodimer, only able to methylate a limited number of RNAs: requires both a 5'UACAGAGAA-3' nonamer sequence and a specific RNA structure. Plays a key role in S-adenosyl-L-methionine homeostasis by mediating N6-methylation of MAT2A mRNAs, altering splicing of MAT2A transcripts: in presence of S-adenosyl-L-methionine, binds the 3'-UTR region of MAT2A mRNA and specifically N6-methylates the first hairpin of MAT2A mRNA, impairing MAT2A splicing and protein expression. In S-adenosyl-L-methionine-limiting conditions, binds the 3'-UTR region of MAT2A mRNA but stalls due to the lack of a methyl donor, preventing N6-methylation and promoting expression of MAT2A. In addition to mRNAs, also able to mediate N6-methylation of U6 small nuclear RNA (U6 snRNA): specifically N6-methylates adenine in position 43 of U6 snRNAs. The sequence is that of RNA N(6)-adenosine-methyltransferase mettl16 (mettl16) from Xenopus laevis (African clawed frog).